Here is a 479-residue protein sequence, read N- to C-terminus: tRNA modification GTPase MnmE (479 aa).

(6S)-5-formyl-5,6,7,8-tetrahydrofolate contacts are provided by Arg-30, Glu-91, and Lys-130. One can recognise a TrmE-type G domain in the interval 226–402; it reads GFRIVLTGLP…VLKDLVKEFA (177 aa). K(+) is bound at residue Asn-236. GTP-binding positions include 236–241, 255–261, and 280–283; these read NVGKSS, TDIPGTT, and DTAG. Ser-240 lines the Mg(2+) pocket. The K(+) site is built by Thr-255, Ile-257, and Thr-260. Thr-261 lines the Mg(2+) pocket. Lys-479 serves as a coordination point for (6S)-5-formyl-5,6,7,8-tetrahydrofolate.

Belongs to the TRAFAC class TrmE-Era-EngA-EngB-Septin-like GTPase superfamily. TrmE GTPase family. In terms of assembly, homodimer. Heterotetramer of two MnmE and two MnmG subunits. K(+) serves as cofactor.

The protein resides in the cytoplasm. Functionally, exhibits a very high intrinsic GTPase hydrolysis rate. Involved in the addition of a carboxymethylaminomethyl (cmnm) group at the wobble position (U34) of certain tRNAs, forming tRNA-cmnm(5)s(2)U34. The chain is tRNA modification GTPase MnmE from Bdellovibrio bacteriovorus (strain ATCC 15356 / DSM 50701 / NCIMB 9529 / HD100).